The chain runs to 468 residues: MNKGRVTQIMGPVVDVKFDGGKLPEIYNALTVKQSNENGSMNLTFEVALHLGDDTVRTVAMSSTDGLVRGTEVEDTGKAISVPVGDATLGRVFNVLGDAIDLDGELPADVHRDPIHRQAPAFEELSTKVEILETGIKVVDLLAPYIKGGKIGLFGGAGVGKTVLIQELINNIAQEHGGISVFAGVGERTREGNDLYHEMSDSGVIKKTAMVFGQMNEPPGARQRVALTGLTMAEHFRDEQGQDVLLFIDNIFRFTQAGSEVSALLGRMPSAVGYQPTLATEMGQLQERITSTNKGSITSIQAVYVPADDYTDPAPATTFAHLDATTNLERRLTQMGIYPAVDPLASTSRALSPEIVGEEHYEVARQVQQTLQRYKELQDIIAILGMDELSEEDKLVVHRARRIQFFLSQNFHVAEQFTGQKGSYVPVKNTVSGFKEILEGKYDDLPEDAFRLVGGIEEVIENAKKMMA.

ATP is bound at residue 155–162 (GGAGVGKT).

The protein belongs to the ATPase alpha/beta chains family. In terms of assembly, F-type ATPases have 2 components, CF(1) - the catalytic core - and CF(0) - the membrane proton channel. CF(1) has five subunits: alpha(3), beta(3), gamma(1), delta(1), epsilon(1). CF(0) has three main subunits: a(1), b(2) and c(9-12). The alpha and beta chains form an alternating ring which encloses part of the gamma chain. CF(1) is attached to CF(0) by a central stalk formed by the gamma and epsilon chains, while a peripheral stalk is formed by the delta and b chains.

The protein localises to the cell membrane. The enzyme catalyses ATP + H2O + 4 H(+)(in) = ADP + phosphate + 5 H(+)(out). Its function is as follows. Produces ATP from ADP in the presence of a proton gradient across the membrane. The catalytic sites are hosted primarily by the beta subunits. The polypeptide is ATP synthase subunit beta (Bacillus cereus (strain B4264)).